The following is a 261-amino-acid chain: Pyrroline-5-carboxylate reductase (261 aa).

It belongs to the pyrroline-5-carboxylate reductase family.

The protein resides in the cytoplasm. It carries out the reaction L-proline + NADP(+) = (S)-1-pyrroline-5-carboxylate + NADPH + 2 H(+). It catalyses the reaction L-proline + NAD(+) = (S)-1-pyrroline-5-carboxylate + NADH + 2 H(+). It participates in amino-acid biosynthesis; L-proline biosynthesis; L-proline from L-glutamate 5-semialdehyde: step 1/1. Its function is as follows. Catalyzes the reduction of 1-pyrroline-5-carboxylate (PCA) to L-proline. The chain is Pyrroline-5-carboxylate reductase from Thermus thermophilus (strain ATCC BAA-163 / DSM 7039 / HB27).